We begin with the raw amino-acid sequence, 164 residues long: Phosphopantetheine adenylyltransferase (164 aa).

Serine 9 provides a ligand contact to substrate. ATP contacts are provided by residues 9–10 and histidine 17; that span reads SF. Substrate contacts are provided by lysine 41, leucine 73, and lysine 87. Residues 88–90, glutamate 98, and 123–129 each bind ATP; these read GLR and YSYLSSS.

It belongs to the bacterial CoaD family. In terms of assembly, homohexamer. Mg(2+) is required as a cofactor.

The protein localises to the cytoplasm. The catalysed reaction is (R)-4'-phosphopantetheine + ATP + H(+) = 3'-dephospho-CoA + diphosphate. Its pathway is cofactor biosynthesis; coenzyme A biosynthesis; CoA from (R)-pantothenate: step 4/5. In terms of biological role, reversibly transfers an adenylyl group from ATP to 4'-phosphopantetheine, yielding dephospho-CoA (dPCoA) and pyrophosphate. This chain is Phosphopantetheine adenylyltransferase, found in Clostridium botulinum (strain 657 / Type Ba4).